The sequence spans 673 residues: Putative transcription factor tau subunit sfc9 (673 aa).

May be a component of the TFIIIC complex.

Its subcellular location is the nucleus. This is Putative transcription factor tau subunit sfc9 from Schizosaccharomyces pombe (strain 972 / ATCC 24843) (Fission yeast).